The following is a 200-amino-acid chain: Thymidine kinase (200 aa).

ATP-binding positions include 15–22 (GPMYSGKS) and 88–91 (DEVQ). Catalysis depends on E89, which acts as the Proton acceptor. The Zn(2+) site is built by C145, C148, C177, and C180.

It belongs to the thymidine kinase family. In terms of assembly, homotetramer.

Its subcellular location is the cytoplasm. It carries out the reaction thymidine + ATP = dTMP + ADP + H(+). The polypeptide is Thymidine kinase (Mycoplasma mobile (strain ATCC 43663 / 163K / NCTC 11711) (Mesomycoplasma mobile)).